Here is a 220-residue protein sequence, read N- to C-terminus: Ras-related protein Rab-3A (220 aa).

GTP-binding residues include serine 31, serine 32, valine 33, glycine 34, lysine 35, threonine 36, serine 37, threonine 48, proline 49, serine 53, and threonine 54. Residue threonine 36 coordinates Mg(2+). A Switch 1 motif is present at residues proline 49 to aspartate 58. Threonine 54 and aspartate 77 together coordinate Mg(2+). Glycine 80 contacts GTP. Positions glycine 80–methionine 96 match the Switch 2 motif. The residue at position 86 (threonine 86) is a Phosphothreonine; by LRRK2. The GTP site is built by asparagine 135, lysine 136, aspartate 138, alanine 166, and lysine 167. Serine 188 and serine 190 each carry phosphoserine. A disordered region spans residues alanine 194–cysteine 220. S-geranylgeranyl cysteine attachment occurs at residues cysteine 218 and cysteine 220. Position 220 is a cysteine methyl ester (cysteine 220).

It belongs to the small GTPase superfamily. Rab family. As to quaternary structure, interacts with RIMS1 and RIMS2. Interacts with Rabphilin-3A/RPH3A and Rab effector Noc2/RPH3AL. Interacts with SYTL4. Interacts with RAB3IP. Interacts with SGSM1 and SGSM3. Interacts with SYT1. Interacts with MYH9; this interaction is essential for lysosome exocytosis and plasma membrane repair. Interacts with STXBP1; this interaction promotes RAB3A dissociation from the vesicle membrane. Interacts with SNCA. The GTP-bound form interacts with REP15. Interacts with GDI1, GDI2, CHM and CHML; phosphorylation at Thr-86 disrupts these interactions. Interacts with MADD (via uDENN domain); the GTP-bound form is preferred for interaction. Mg(2+) serves as cofactor. Phosphorylation of Thr-86 in the switch II region by LRRK2 prevents the association of RAB regulatory proteins, including CHM, CHML and RAB GDP dissociation inhibitors GDI1 and GDI2. Specifically expressed in brain.

It is found in the cytoplasm. It localises to the cytosol. The protein localises to the lysosome. The protein resides in the cytoplasmic vesicle. Its subcellular location is the secretory vesicle. It is found in the cell projection. It localises to the axon. The protein localises to the cell membrane. The protein resides in the presynapse. Its subcellular location is the postsynapse. It catalyses the reaction GTP + H2O = GDP + phosphate + H(+). Its activity is regulated as follows. Regulated by guanine nucleotide exchange factors (GEFs) including RAB3IL1 and MADD which promote the exchange of bound GDP for free GTP. Regulated by GTPase activating proteins (GAPs) including RAB3GAP1 and TBC1D10B which increase the GTP hydrolysis activity. Inhibited by GDP dissociation inhibitors (GDIs) which prevent Rab-GDP dissociation. In terms of biological role, the small GTPases Rab are key regulators of intracellular membrane trafficking, from the formation of transport vesicles to their fusion with membranes. Rabs cycle between an inactive GDP-bound form and an active GTP-bound form that is able to recruit to membranes different sets of downstream effectors directly responsible for vesicle formation, movement, tethering and fusion. RAB3A plays a central role in regulated exocytosis and secretion. Controls the recruitment, tethering and docking of secretory vesicles to the plasma membrane. Upon stimulation, switches to its active GTP-bound form, cycles to vesicles and recruits effectors such as RIMS1, RIMS2, Rabphilin-3A/RPH3A, RPH3AL or SYTL4 to help the docking of vesicules onto the plasma membrane. Upon GTP hydrolysis by GTPase-activating protein, dissociates from the vesicle membrane allowing the exocytosis to proceed. Stimulates insulin secretion through interaction with RIMS2 or RPH3AL effectors in pancreatic beta cells. Regulates calcium-dependent lysosome exocytosis and plasma membrane repair (PMR) via the interaction with 2 effectors, SYTL4 and myosin-9/MYH9. Acts as a positive regulator of acrosome content secretion in sperm cells by interacting with RIMS1. Also plays a role in the regulation of dopamine release by interacting with synaptotagmin I/SYT. This Homo sapiens (Human) protein is Ras-related protein Rab-3A.